We begin with the raw amino-acid sequence, 162 residues long: Allophycocyanin beta chain (162 aa).

Asparagine 72 carries the N4-methylasparagine modification. Cysteine 82 is a binding site for (2R,3E)-phycocyanobilin.

Belongs to the phycobiliprotein family. As to quaternary structure, heterodimer of an alpha and a beta chain. Contains one covalently linked phycocyanobilin chromophore.

It localises to the cellular thylakoid membrane. In terms of biological role, light-harvesting photosynthetic bile pigment-protein from the phycobiliprotein complex. Allophycocyanin has a maximum absorption at approximately 650 nanometers. The chain is Allophycocyanin beta chain from Microchaete diplosiphon (Fremyella diplosiphon).